The sequence spans 590 residues: Muscarinic acetylcholine receptor M3 (590 aa).

Topologically, residues 1 to 67 are extracellular; that stretch reads MTLHSNSTTS…DPLGGHTVWQ (67 aa). 4 N-linked (GlcNAc...) asparagine glycosylation sites follow: asparagine 6, asparagine 15, asparagine 41, and asparagine 48. A helical membrane pass occupies residues 68 to 91; the sequence is VVFIAFLTGILALVTIIGNILVIV. At 92 to 104 the chain is on the cytoplasmic side; the sequence is SFKVNKQLKTVNN. The helical transmembrane segment at 105–130 threads the bilayer; the sequence is YFLLSLACADLIIGVISMNLFTTYII. Over 131 to 142 the chain is Extracellular; sequence MNRWALGNLACD. Cysteine 141 and cysteine 221 form a disulfide bridge. A helical transmembrane segment spans residues 143-164; sequence LWLAIDYVASNASVMNLLVISF. Residues 165–184 are Cytoplasmic-facing; it reads DRYFSITRPLTYRAKRTTKR. The helical transmembrane segment at 185 to 206 threads the bilayer; sequence AGVMIGLAWVISFVLWAPAILF. The Extracellular portion of the chain corresponds to 207 to 229; sequence WQYFVGKRTVPPGECFIQFLSEP. The helical transmembrane segment at 230-252 threads the bilayer; that stretch reads TITFGTAIAAFYMPVTIMTILYW. Residues 253-491 are Cytoplasmic-facing; that stretch reads RIYKETEKRT…SLVKEKKAAQ (239 aa). The short motif at 275 to 281 is the Basolateral sorting signal element; it reads AETENFV. The interval 323-357 is disordered; that stretch reads SSEQMDQDHSSSDSWNNNDAAASLENSASSDEEDI. The span at 334-345 shows a compositional bias: low complexity; it reads SDSWNNNDAAAS. Serine 385 bears the Phosphoserine mark. A helical transmembrane segment spans residues 492 to 514; that stretch reads TLSAILLAFIITWTPYNIMVLVN. The Extracellular segment spans residues 515–526; that stretch reads TFCDSCIPKTFW. A disulfide bridge links cysteine 517 with cysteine 520. Residues 527-546 form a helical membrane-spanning segment; it reads NLGYWLCYINSTVNPVCYAL. Residues 547–590 are Cytoplasmic-facing; the sequence is CNKTFRTTFKMLLLCQCDKKKRRKQQYQQRQSVIFHKRAPEQAL.

This sequence belongs to the G-protein coupled receptor 1 family. Muscarinic acetylcholine receptor subfamily. CHRM3 sub-subfamily. In terms of assembly, homodimer; the dimers can form tetramers. Interacts with NALCN. Interacts with TMEM147.

The protein localises to the cell membrane. It is found in the postsynaptic cell membrane. The protein resides in the basolateral cell membrane. It localises to the endoplasmic reticulum membrane. The muscarinic acetylcholine receptor mediates various cellular responses, including inhibition of adenylate cyclase, breakdown of phosphoinositides and modulation of potassium channels through the action of G proteins. Primary transducing effect is Pi turnover. The chain is Muscarinic acetylcholine receptor M3 (CHRM3) from Pongo pygmaeus (Bornean orangutan).